The following is a 176-amino-acid chain: Large ribosomal subunit protein uL10 (176 aa).

This sequence belongs to the universal ribosomal protein uL10 family. Part of the ribosomal stalk of the 50S ribosomal subunit. The N-terminus interacts with L11 and the large rRNA to form the base of the stalk. The C-terminus forms an elongated spine to which L12 dimers bind in a sequential fashion forming a multimeric L10(L12)X complex.

Its function is as follows. Forms part of the ribosomal stalk, playing a central role in the interaction of the ribosome with GTP-bound translation factors. The chain is Large ribosomal subunit protein uL10 from Sorangium cellulosum (strain So ce56) (Polyangium cellulosum (strain So ce56)).